The following is a 226-amino-acid chain: Leucyl/phenylalanyl-tRNA--protein transferase (226 aa).

Belongs to the L/F-transferase family.

The protein localises to the cytoplasm. It carries out the reaction N-terminal L-lysyl-[protein] + L-leucyl-tRNA(Leu) = N-terminal L-leucyl-L-lysyl-[protein] + tRNA(Leu) + H(+). The catalysed reaction is N-terminal L-arginyl-[protein] + L-leucyl-tRNA(Leu) = N-terminal L-leucyl-L-arginyl-[protein] + tRNA(Leu) + H(+). The enzyme catalyses L-phenylalanyl-tRNA(Phe) + an N-terminal L-alpha-aminoacyl-[protein] = an N-terminal L-phenylalanyl-L-alpha-aminoacyl-[protein] + tRNA(Phe). In terms of biological role, functions in the N-end rule pathway of protein degradation where it conjugates Leu, Phe and, less efficiently, Met from aminoacyl-tRNAs to the N-termini of proteins containing an N-terminal arginine or lysine. The polypeptide is Leucyl/phenylalanyl-tRNA--protein transferase (Pseudomonas aeruginosa (strain UCBPP-PA14)).